The primary structure comprises 647 residues: Carotenoid phi-ring synthase (647 aa).

FAD-binding positions include alanine 67, 86-87 (EA), lysine 94, and tyrosine 120. The Rieske domain maps to 322-416 (VASIPKREVP…VREAGEMLVI (95 aa)). Residues cysteine 362, histidine 364, cysteine 380, and histidine 383 each contribute to the [2Fe-2S] cluster site. Positions 601 and 612 each coordinate FAD.

The protein belongs to the carotenoid/retinoid oxidoreductase family. FAD is required as a cofactor. The cofactor is [2Fe-2S] cluster.

It carries out the reaction a carotenoid beta-end derivative + 2 A = a carotenoid phi-end derivative + 2 AH2. The protein operates within carotenoid biosynthesis. Its function is as follows. Involved in the biosynthesis of chlorobactene, a carotenoid with aromatic end group. Catalyzes the introduction of two additional double bonds into the ionone ring of gamma-carotene to produce chlorobactene. The reaction includes an intramolecular methyl transfer from position C1 to position C2 of the ring. The protein is Carotenoid phi-ring synthase of Chlorobaculum tepidum (strain ATCC 49652 / DSM 12025 / NBRC 103806 / TLS) (Chlorobium tepidum).